The primary structure comprises 815 residues: TBC1 domain family member 5 (815 aa).

A Phosphoserine modification is found at S44. Residues 56-64 (MKEWEELFV) are required for interaction with retromer; involved in interaction with ATG8 family proteins. The short motif at 57–62 (KEWEEL) is the LIR 1 element. In terms of domain architecture, Rab-GAP TBC spans 81 to 359 (LRSSRFRSIC…VVWDALFADS (279 aa)). Position 448 is an asymmetric dimethylarginine; alternate (R448). At R448 the chain carries Omega-N-methylarginine; alternate. Phosphoserine is present on S460. Residues 475–591 (PGSMGGPVPG…SATKKDSFFS (117 aa)) are disordered. Composition is skewed to low complexity over residues 483-492 (PGNNSSSSFS) and 510-539 (QQQQ…QQQQ). S546, S563, S565, S568, S578, and S608 each carry phosphoserine. Positions 556 to 568 (SSKTISSSPSIES) are enriched in low complexity. Disordered stretches follow at residues 702–733 (SGQD…PDDF) and 754–815 (QPLL…PLDI). A compositionally biased stretch (polar residues) spans 754–765 (QPLLTLRSTSGK). Over residues 783–796 (PASASASSSNPSSS) the composition is skewed to low complexity. The short motif at 805–809 (SGFTI) is the LIR 2 element. Positions 806-811 (GFTIVS) are required for interaction with ATG8 family proteins. S811 is modified (phosphoserine).

Interacts with MAP1LC3A, MAP1LC3B, MAP1LC3C, GABARAP, GABARAPL1, GABARAPL2. Interacts with VPS29 and VPS35; indicative for an association with retromer CSC subcomplex. MAP1LC3A and VPS29 compete for binding to TBC1D5. Interacts with AP2M1; indicative for an association with the AP2 complex. Interacts with ULK1 and ATG13 (phosphorylated); indicative for an association with the activated ULK1-ATG13-FIP200 complex. Interacts with ATG9A; the interactions seems to be restricted to the AP2-clathrin-associated fraction of ATG9A.

Its subcellular location is the endosome membrane. The protein resides in the cytoplasmic vesicle. The protein localises to the autophagosome. Functionally, may act as a GTPase-activating protein for Rab family protein(s). May act as a GAP for RAB7A. Can displace RAB7A and retromer CSC subcomplex from the endosomal membrane to the cytosol; at least retromer displacement seems to require its catalytic activity. Required for retrograde transport of cargo proteins from endosomes to the trans-Golgi network (TGN); the function seems to require its catalytic activity. Involved in regulation of autophagy. May act as a molecular switch between endosomal and autophagosomal transport and is involved in reprogramming vesicle trafficking upon autophagy induction. Involved in the trafficking of ATG9A upon activation of autophagy. May regulate the recruitment of ATG9A-AP2-containing vesicles to autophagic membranes. This is TBC1 domain family member 5 (Tbc1d5) from Mus musculus (Mouse).